A 455-amino-acid chain; its full sequence is Phosphoglucosamine mutase (455 aa).

S107 serves as the catalytic Phosphoserine intermediate. Mg(2+)-binding residues include S107, D247, D249, and D251. S107 bears the Phosphoserine mark.

The protein belongs to the phosphohexose mutase family. It depends on Mg(2+) as a cofactor. In terms of processing, activated by phosphorylation.

The catalysed reaction is alpha-D-glucosamine 1-phosphate = D-glucosamine 6-phosphate. Functionally, catalyzes the conversion of glucosamine-6-phosphate to glucosamine-1-phosphate. This chain is Phosphoglucosamine mutase, found in Leuconostoc citreum (strain KM20).